Reading from the N-terminus, the 360-residue chain is MSQERPTFYRQELNKTIWEVPERYQNLSPVGSGAYGSVCAAFDTKTGLRVAVKKLSRPFQSIIHAKRTYRELRLLKHMKHENVIGLLDVFTPARSLEEFNDVYLVTHLMGADLNNIVKCQKLTDDHVQFLIYQILRGLKYIHSADIIHRDLKPSNLAVNEDCELKILDFGLARHTDDEMTGYVATRWYRAPEIMLNWMHYNQTVDIWSVGCIMAELLTGRTLFPGTDHIDQLKLILRLVGTPGAELLKKISSESARNYIQSLTQMPKMNFANVFIGANPLAVDLLEKMLVLDSDKRITAAQALAHAYFAQYHDPDDEPVADPYDQSFESRDLLIDEWKSLTYDEVISFVPPPLDQEEMES.

Position 2 is an N-acetylserine (S2). S2 is modified (phosphoserine). Position 16 is a phosphothreonine (T16). In terms of domain architecture, Protein kinase spans 24-308 (YQNLSPVGSG…AAQALAHAYF (285 aa)). Residues 30-38 (VGSGAYGSV) and K53 each bind ATP. 2 positions are modified to N6-acetyllysine: K53 and K152. The active-site Proton acceptor is D168. At T180 the chain carries Phosphothreonine; by MAP2K3, MAP2K4, MAP2K6 and autocatalysis. Positions 180–182 (TGY) match the TXY motif. The residue at position 182 (Y182) is a Phosphotyrosine; by MAP2K3, MAP2K4, MAP2K6 and autocatalysis. T263 carries the post-translational modification Phosphothreonine. Y323 carries the post-translational modification Phosphotyrosine; by ZAP70.

This sequence belongs to the protein kinase superfamily. CMGC Ser/Thr protein kinase family. MAP kinase subfamily. In terms of assembly, component of a signaling complex containing at least AKAP13, PKN1, MAPK14, ZAK and MAP2K3. Within this complex, AKAP13 interacts directly with PKN1, which in turn recruits MAPK14, MAP2K3 and ZAK. Binds to a kinase interaction motif within the protein tyrosine phosphatase, PTPRR. This interaction retains MAPK14 in the cytoplasm and prevents nuclear accumulation. Interacts with SPAG9 and GADD45A. Interacts with CDC25B, CDC25C, DUSP1, DUSP10, DUSP16, NP60, SUPT20H and TAB1. Interacts with casein kinase II subunits CSNK2A1 and CSNK2B. Interacts with PPM1D. Interacts with CDK5RAP3; recruits PPM1D to MAPK14 and may regulate its dephosphorylation. Interacts with DUSP2; this interaction does not lead to catalytic activation of DUSP2 and dephosphrylation of MAPK14. Mg(2+) serves as cofactor. In terms of processing, dually phosphorylated on Thr-180 and Tyr-182 by the MAP2Ks MAP2K3/MKK3, MAP2K4/MKK4 and MAP2K6/MKK6 in response to inflammatory citokines, environmental stress or growth factors, which activates the enzyme. Dual phosphorylation can also be mediated by TAB1-mediated autophosphorylation. TCR engagement in T-cells also leads to Tyr-323 phosphorylation by ZAP70. Dephosphorylated and inactivated by DUPS1, DUSP10 and DUSP16. PPM1D also mediates dephosphorylation and inactivation of MAPK14. Acetylated at Lys-53 and Lys-152 by KAT2B and EP300. Acetylation at Lys-53 increases the affinity for ATP and enhances kinase activity. Lys-53 and Lys-152 are deacetylated by HDAC3. Post-translationally, ubiquitinated. Ubiquitination leads to degradation by the proteasome pathway. Brain, heart, placenta, pancreas and skeletal muscle. Expressed to a lesser extent in lung, liver and kidney.

It is found in the cytoplasm. The protein localises to the nucleus. The enzyme catalyses L-seryl-[protein] + ATP = O-phospho-L-seryl-[protein] + ADP + H(+). It catalyses the reaction L-threonyl-[protein] + ATP = O-phospho-L-threonyl-[protein] + ADP + H(+). Activated by cell stresses such as DNA damage, heat shock, osmotic shock, anisomycin and sodium arsenite, as well as pro-inflammatory stimuli such as bacterial lipopolysaccharide (LPS) and interleukin-1. Activation occurs through dual phosphorylation of Thr-180 and Tyr-182 by either of two dual specificity kinases, MAP2K3/MKK3 or MAP2K6/MKK6, and potentially also MAP2K4/MKK4, as well as by TAB1-mediated autophosphorylation. MAPK14 phosphorylated on both Thr-180 and Tyr-182 is 10-20-fold more active than MAPK14 phosphorylated only on Thr-180, whereas MAPK14 phosphorylated on Tyr-182 alone is inactive. whereas Thr-180 is necessary for catalysis, Tyr-182 may be required for auto-activation and substrate recognition. Phosphorylated at Tyr-323 by ZAP70 in an alternative activation pathway in response to TCR signaling in T-cells. This alternative pathway is inhibited by GADD45A. Inhibited by dual specificity phosphatases, such as DUSP1, DUSP10, and DUSP16. Specifically inhibited by the binding of pyridinyl-imidazole compounds, which are cytokine-suppressive anti-inflammatory drugs (CSAID). Isoform Mxi2 is 100-fold less sensitive to these agents than the other isoforms and is not inhibited by DUSP1. Isoform Exip is not activated by MAP2K6. SB203580 is an inhibitor of MAPK14. Serine/threonine kinase which acts as an essential component of the MAP kinase signal transduction pathway. MAPK14 is one of the four p38 MAPKs which play an important role in the cascades of cellular responses evoked by extracellular stimuli such as pro-inflammatory cytokines or physical stress leading to direct activation of transcription factors. Accordingly, p38 MAPKs phosphorylate a broad range of proteins and it has been estimated that they may have approximately 200 to 300 substrates each. Some of the targets are downstream kinases which are activated through phosphorylation and further phosphorylate additional targets. RPS6KA5/MSK1 and RPS6KA4/MSK2 can directly phosphorylate and activate transcription factors such as CREB1, ATF1, the NF-kappa-B isoform RELA/NFKB3, STAT1 and STAT3, but can also phosphorylate histone H3 and the nucleosomal protein HMGN1. RPS6KA5/MSK1 and RPS6KA4/MSK2 play important roles in the rapid induction of immediate-early genes in response to stress or mitogenic stimuli, either by inducing chromatin remodeling or by recruiting the transcription machinery. On the other hand, two other kinase targets, MAPKAPK2/MK2 and MAPKAPK3/MK3, participate in the control of gene expression mostly at the post-transcriptional level, by phosphorylating ZFP36 (tristetraprolin) and ELAVL1, and by regulating EEF2K, which is important for the elongation of mRNA during translation. MKNK1/MNK1 and MKNK2/MNK2, two other kinases activated by p38 MAPKs, regulate protein synthesis by phosphorylating the initiation factor EIF4E2. MAPK14 also interacts with casein kinase II, leading to its activation through autophosphorylation and further phosphorylation of TP53/p53. In the cytoplasm, the p38 MAPK pathway is an important regulator of protein turnover. For example, CFLAR is an inhibitor of TNF-induced apoptosis whose proteasome-mediated degradation is regulated by p38 MAPK phosphorylation. In a similar way, MAPK14 phosphorylates the ubiquitin ligase SIAH2, regulating its activity towards EGLN3. MAPK14 may also inhibit the lysosomal degradation pathway of autophagy by interfering with the intracellular trafficking of the transmembrane protein ATG9. Another function of MAPK14 is to regulate the endocytosis of membrane receptors by different mechanisms that impinge on the small GTPase RAB5A. In addition, clathrin-mediated EGFR internalization induced by inflammatory cytokines and UV irradiation depends on MAPK14-mediated phosphorylation of EGFR itself as well as of RAB5A effectors. Ectodomain shedding of transmembrane proteins is regulated by p38 MAPKs as well. In response to inflammatory stimuli, p38 MAPKs phosphorylate the membrane-associated metalloprotease ADAM17. Such phosphorylation is required for ADAM17-mediated ectodomain shedding of TGF-alpha family ligands, which results in the activation of EGFR signaling and cell proliferation. Another p38 MAPK substrate is FGFR1. FGFR1 can be translocated from the extracellular space into the cytosol and nucleus of target cells, and regulates processes such as rRNA synthesis and cell growth. FGFR1 translocation requires p38 MAPK activation. In the nucleus, many transcription factors are phosphorylated and activated by p38 MAPKs in response to different stimuli. Classical examples include ATF1, ATF2, ATF6, ELK1, PTPRH, DDIT3, TP53/p53 and MEF2C and MEF2A. The p38 MAPKs are emerging as important modulators of gene expression by regulating chromatin modifiers and remodelers. The promoters of several genes involved in the inflammatory response, such as IL6, IL8 and IL12B, display a p38 MAPK-dependent enrichment of histone H3 phosphorylation on 'Ser-10' (H3S10ph) in LPS-stimulated myeloid cells. This phosphorylation enhances the accessibility of the cryptic NF-kappa-B-binding sites marking promoters for increased NF-kappa-B recruitment. Phosphorylates CDC25B and CDC25C which is required for binding to 14-3-3 proteins and leads to initiation of a G2 delay after ultraviolet radiation. Phosphorylates TIAR following DNA damage, releasing TIAR from GADD45A mRNA and preventing mRNA degradation. The p38 MAPKs may also have kinase-independent roles, which are thought to be due to the binding to targets in the absence of phosphorylation. Protein O-Glc-N-acylation catalyzed by the OGT is regulated by MAPK14, and, although OGT does not seem to be phosphorylated by MAPK14, their interaction increases upon MAPK14 activation induced by glucose deprivation. This interaction may regulate OGT activity by recruiting it to specific targets such as neurofilament H, stimulating its O-Glc-N-acylation. Required in mid-fetal development for the growth of embryo-derived blood vessels in the labyrinth layer of the placenta. Also plays an essential role in developmental and stress-induced erythropoiesis, through regulation of EPO gene expression. Isoform MXI2 activation is stimulated by mitogens and oxidative stress and only poorly phosphorylates ELK1 and ATF2. Isoform EXIP may play a role in the early onset of apoptosis. Phosphorylates S100A9 at 'Thr-113'. Phosphorylates NLRP1 downstream of MAP3K20/ZAK in response to UV-B irradiation and ribosome collisions, promoting activation of the NLRP1 inflammasome and pyroptosis. Functionally, (Microbial infection) Activated by phosphorylation by M.tuberculosis EsxA in T-cells leading to inhibition of IFN-gamma production; phosphorylation is apparent within 15 minutes and is inhibited by kinase-specific inhibitors SB203580 and siRNA. The sequence is that of Mitogen-activated protein kinase 14 from Homo sapiens (Human).